Consider the following 198-residue polypeptide: Copy number protein (198 aa).

It is found in the cell membrane. Functionally, involved in copy number control of pIP404. This basic and hydrophobic protein may exert its effect from the cytoplasmic membrane. The chain is Copy number protein (cop) from Clostridium perfringens.